Here is an 866-residue protein sequence, read N- to C-terminus: Fibrinogen alpha chain (866 aa).

An N-terminal signal peptide occupies residues 1–19 (MFSMRIVCLVLSVVGTAWT). Ser22 is modified (phosphoserine). Residues 36–38 (GPR) are alpha-chain polymerization, binding distal domain of another fibrin gamma chain. Ser45 carries the post-translational modification Phosphoserine; by FAM20C. Ser50 is subject to Phosphoserine. At Ser56 the chain carries Phosphoserine; by FAM20C. The stretch at 68-631 (CRMKGLIDEV…GHAKSRPVRD (564 aa)) forms a coiled coil. The segment at 262 to 460 (ERPGGNEITR…SGSTTTTRRS (199 aa)) is disordered. Residues 270–299 (TRGGSTSYGTGSETESPRNPSSAGSWNSGS) show a composition bias toward low complexity. Phosphoserine is present on residues Ser281, Ser291, and Ser294. Residue Thr320 is glycosylated (O-linked (GalNAc...) threonine). Lys322 participates in a covalent cross-link: Isoglutamyl lysine isopeptide (Lys-Gln) (interchain with Q-41 in alpha-2-antiplasmin). Residue Gln347 forms an Isoglutamyl lysine isopeptide (Gln-Lys) (interchain with K-?) linkage. Residue Ser351 is glycosylated (O-linked (GalNAc...) serine). Polar residues predominate over residues 354 to 391 (PGSTGTWNPGSSERGSAGHWTSESSVSGSTGQWHSESG). The residue at position 364 (Ser364) is a Phosphoserine; by FAM20C. Gln385 participates in a covalent cross-link: Isoglutamyl lysine isopeptide (Gln-Lys) (interchain with K-?). Thr412 is subject to Phosphothreonine. Over residues 424 to 449 (TRREYHTEKLVTSKGDKELRTGKEKV) the composition is skewed to basic and acidic residues. The segment covering 450 to 460 (TSGSTTTTRRS) has biased composition (low complexity). Residue Ser451 is modified to Phosphoserine. The N-linked (GlcNAc...) asparagine; in variant Caracas-2 glycan is linked to Ser453. The cysteines at positions 461 and 491 are disulfide-linked. Ser501 bears the Phosphoserine mark. Thr505 carries the phosphothreonine modification. Position 524 is a phosphoserine; by FAM20C (Ser524). Isoglutamyl lysine isopeptide (Lys-Gln) (interchain with Q-?) cross-links involve residues Lys527 and Lys558. Residues 543 to 638 (ETESRGSESG…VRDCDDVLQT (96 aa)) are disordered. Ser560 is subject to Phosphoserine; by FAM20C. Pro565 carries the 4-hydroxyproline; by P4HA1 modification. Residues Lys575, Lys581, and Lys599 each participate in an isoglutamyl lysine isopeptide (Lys-Gln) (interchain with Q-?) cross-link. Over residues 575-589 (KSSSYSKQFTSSTSY) the composition is skewed to low complexity. A compositionally biased stretch (basic and acidic residues) spans 594-617 (STFESKSYKMADEAGSEADHEGTH). Residue Ser609 is modified to Phosphoserine; by FAM20C. Over residues 618 to 627 (STKRGHAKSR) the composition is skewed to basic residues. The 242-residue stretch at 623–864 (HAKSRPVRDC…AVRMKIRPLV (242 aa)) folds into the Fibrinogen C-terminal domain. An N-linked (GlcNAc...) asparagine glycan is attached at Asn686. Residues Asp791, Asp793, Trp795, and Glu797 each contribute to the Ca(2+) site. Cys799 and Cys812 are joined by a disulfide.

Heterohexamer; disulfide linked. Contains 2 sets of 3 non-identical chains (alpha, beta and gamma). The 2 heterotrimers are in head to head conformation with the N-termini in a small central domain. As to quaternary structure, (Microbial infection) Interacts with Staphylococcus aureus protein Fib; this interaction inhibits fibrinogen-dependent platelet aggregation and protects the bacteria form phagocytosis. Post-translationally, the alpha chain is normally not N-glycosylated, even though glycosylation at Asn-686 was observed when a fragment of the protein was expressed in insect cells. It is well known that heterologous expression of isolated domains can lead to adventitious protein modifications. Besides, glycosylation at Asn-686 is supported by large-scale glycoproteomics studies, but the evidence is still quite tenuous. Most likely, Asn-686 is not glycosylated in the healthy human body, or only with low efficiency. In terms of processing, O-glycosylated. Forms F13A-mediated cross-links between a glutamine and the epsilon-amino group of a lysine residue, forming fibronectin-fibrinogen heteropolymers. Post-translationally, about one-third of the alpha chains in the molecules in blood were found to be phosphorylated. In terms of processing, conversion of fibrinogen to fibrin is triggered by thrombin, which cleaves fibrinopeptides A and B from alpha and beta chains, and thus exposes the N-terminal polymerization sites responsible for the formation of the soft clot. The soft clot is converted into the hard clot by factor XIIIA which catalyzes the epsilon-(gamma-glutamyl)lysine cross-linking between gamma chains (stronger) and between alpha chains (weaker) of different monomers. Phosphorylated by FAM20C in the extracellular medium. Detected in blood plasma (at protein level).

The protein resides in the secreted. Cleaved by the protease thrombin to yield monomers which, together with fibrinogen beta (FGB) and fibrinogen gamma (FGG), polymerize to form an insoluble fibrin matrix. Fibrin has a major function in hemostasis as one of the primary components of blood clots. In addition, functions during the early stages of wound repair to stabilize the lesion and guide cell migration during re-epithelialization. Was originally thought to be essential for platelet aggregation, based on in vitro studies using anticoagulated blood. However, subsequent studies have shown that it is not absolutely required for thrombus formation in vivo. Enhances expression of SELP in activated platelets via an ITGB3-dependent pathway. Maternal fibrinogen is essential for successful pregnancy. Fibrin deposition is also associated with infection, where it protects against IFNG-mediated hemorrhage. May also facilitate the immune response via both innate and T-cell mediated pathways. The sequence is that of Fibrinogen alpha chain (FGA) from Homo sapiens (Human).